Reading from the N-terminus, the 87-residue chain is Small ribosomal subunit protein uS15c (87 aa).

Positions 1-20 are disordered; the sequence is MNQNLSIRKRNKLKQDSGSP.

This sequence belongs to the universal ribosomal protein uS15 family. As to quaternary structure, part of the 30S ribosomal subunit.

Its subcellular location is the plastid. It is found in the chloroplast. The sequence is that of Small ribosomal subunit protein uS15c (rps15) from Zygnema circumcarinatum (Green alga).